A 432-amino-acid chain; its full sequence is Glutamate-1-semialdehyde 2,1-aminomutase (432 aa).

Lysine 266 is modified (N6-(pyridoxal phosphate)lysine).

Belongs to the class-III pyridoxal-phosphate-dependent aminotransferase family. HemL subfamily. Homodimer. It depends on pyridoxal 5'-phosphate as a cofactor.

Its subcellular location is the cytoplasm. It carries out the reaction (S)-4-amino-5-oxopentanoate = 5-aminolevulinate. The protein operates within porphyrin-containing compound metabolism; protoporphyrin-IX biosynthesis; 5-aminolevulinate from L-glutamyl-tRNA(Glu): step 2/2. This Janthinobacterium sp. (strain Marseille) (Minibacterium massiliensis) protein is Glutamate-1-semialdehyde 2,1-aminomutase.